The primary structure comprises 319 residues: Methionyl-tRNA formyltransferase (319 aa).

116–119 (SLLP) contributes to the (6S)-5,6,7,8-tetrahydrofolate binding site.

This sequence belongs to the Fmt family.

It catalyses the reaction L-methionyl-tRNA(fMet) + (6R)-10-formyltetrahydrofolate = N-formyl-L-methionyl-tRNA(fMet) + (6S)-5,6,7,8-tetrahydrofolate + H(+). In terms of biological role, attaches a formyl group to the free amino group of methionyl-tRNA(fMet). The formyl group appears to play a dual role in the initiator identity of N-formylmethionyl-tRNA by promoting its recognition by IF2 and preventing the misappropriation of this tRNA by the elongation apparatus. In Chlorobium phaeovibrioides (strain DSM 265 / 1930) (Prosthecochloris vibrioformis (strain DSM 265)), this protein is Methionyl-tRNA formyltransferase.